Consider the following 121-residue polypeptide: ATP synthase epsilon chain (121 aa).

It belongs to the ATPase epsilon chain family. F-type ATPases have 2 components, CF(1) - the catalytic core - and CF(0) - the membrane proton channel. CF(1) has five subunits: alpha(3), beta(3), gamma(1), delta(1), epsilon(1). CF(0) has three main subunits: a, b and c.

The protein resides in the cell membrane. Functionally, produces ATP from ADP in the presence of a proton gradient across the membrane. The sequence is that of ATP synthase epsilon chain from Mycolicibacterium vanbaalenii (strain DSM 7251 / JCM 13017 / BCRC 16820 / KCTC 9966 / NRRL B-24157 / PYR-1) (Mycobacterium vanbaalenii).